The sequence spans 170 residues: Lipoprotein signal peptidase (170 aa).

The next 3 membrane-spanning stretches (helical) occupy residues 12 to 32 (WYWV…WVLA), 67 to 87 (WQRW…TVWL), and 93 to 113 (SLLK…GNLV). Active-site residues include D123 and D141. The helical transmembrane segment at 137–157 (FNIADSAIFIGAVLIIWDSFF) threads the bilayer.

The protein belongs to the peptidase A8 family.

It is found in the cell inner membrane. The enzyme catalyses Release of signal peptides from bacterial membrane prolipoproteins. Hydrolyzes -Xaa-Yaa-Zaa-|-(S,diacylglyceryl)Cys-, in which Xaa is hydrophobic (preferably Leu), and Yaa (Ala or Ser) and Zaa (Gly or Ala) have small, neutral side chains.. Its pathway is protein modification; lipoprotein biosynthesis (signal peptide cleavage). This protein specifically catalyzes the removal of signal peptides from prolipoproteins. In Shewanella oneidensis (strain ATCC 700550 / JCM 31522 / CIP 106686 / LMG 19005 / NCIMB 14063 / MR-1), this protein is Lipoprotein signal peptidase.